Here is a 297-residue protein sequence, read N- to C-terminus: Probable terminal-alkyne amino-acid exporter (297 aa).

9 helical membrane-spanning segments follow: residues 6–26 (AVWALVLTVVTWASAFPAIRV), 32–52 (GVAGLSLSRLTVASVALAIAA), 65–85 (LPMIALCGATGMSAYQVLLNW), 95–115 (ASLLIAIAPVFSVLLAAVFLG), 123–143 (IAGSAVAISGAAVIAVAGGHA), 150–170 (WVVLAAAVVQGVYHFATKPLL), 178–198 (VACYAMWAGTVFLLPLLPAMV), 212–232 (TVYLGLLPSAIGFVSWGYAVA), and 249–269 (VALVVAFVWLGEVPPPLALVG). EamA domains follow at residues 6–137 (AVWA…AVIA) and 150–281 (WVVL…MLIN).

It belongs to the EamA transporter family.

The protein localises to the cell membrane. Probably involved in the export of terminal alkyne-containing amino acids, namely L-propargylglycine (Pra) and L-beta-ethynylserine, that are antibiotics synthesized by enzymes encoded in the same gene cluster. This Streptantibioticus cattleyicolor (strain ATCC 35852 / DSM 46488 / JCM 4925 / NBRC 14057 / NRRL 8057) (Streptomyces cattleya) protein is Probable terminal-alkyne amino-acid exporter.